We begin with the raw amino-acid sequence, 322 residues long: Transcription factor IIIA (322 aa).

9 consecutive C2H2-type zinc fingers follow at residues F12–H36, F42–H64, Y70–H95, Y102–H126, F132–H156, Y159–H184, L188–H211, F218–H243, and F249–H273. The tract at residues V272–P322 is disordered. Positions K278 to L292 are enriched in basic residues. A compositionally biased stretch (polar residues) spans S312–P322.

Its subcellular location is the nucleus. Involved in ribosomal large subunit biogenesis. Interacts with the internal control region (ICR) of approximately 50 bases within the 5S RNA genes, is required for correct transcription of these genes by RNA polymerase III. Also binds the transcribed 5S RNA's. The polypeptide is Transcription factor IIIA (gtf3a) (Ictalurus punctatus (Channel catfish)).